A 233-amino-acid chain; its full sequence is Glycolipid transfer protein 3 (233 aa).

A ganglioside GM3 (d18:1(4E))-binding residues include aspartate 79, asparagine 83, tryptophan 126, and histidine 165.

This sequence belongs to the GLTP family.

Functionally, may be involved in glycolipids transfer. The protein is Glycolipid transfer protein 3 of Arabidopsis thaliana (Mouse-ear cress).